The sequence spans 409 residues: Protein naked cuticle homolog 2 (409 aa).

A lipid anchor (N-myristoyl glycine) is attached at glycine 2. The EF-hand domain occupies 109–144; sequence AEDNRQEWVFTLYDFDNSGKVTKEDMSSLMHTIYDV. Aspartate 122, aspartate 124, serine 126, lysine 128, and aspartate 133 together coordinate Ca(2+). 4 disordered regions span residues 160–224, 243–315, 346–366, and 388–409; these read LRVK…YCVD, TSRF…RYPG, SHTH…RIRS, and RHEH…YHQT. Basic and acidic residues-rich tracts occupy residues 171 to 185 and 193 to 224; these read AARR…RETS and VRSE…YCVD. Positions 247–268 are enriched in low complexity; the sequence is DSSSPDADQDPPSRSSHSQSRP. The segment covering 389 to 409 has biased composition (basic residues); the sequence is HEHHHHHEHHHHHHYHHYHQT.

Belongs to the NKD family. In terms of tissue distribution, expressed ubiquitously until 1 dpf, when expression becomes confined to the anterior CNS, with slight expression in the developing tail.

The protein resides in the cell membrane. The protein localises to the cytoplasm. Its function is as follows. Cell autonomous antagonist of both the canonical and non-canonical Wnt signaling pathways. This chain is Protein naked cuticle homolog 2 (nkd2), found in Danio rerio (Zebrafish).